The chain runs to 453 residues: Pup--protein ligase (453 aa).

Glu-9 contributes to the Mg(2+) binding site. Arg-53 provides a ligand contact to ATP. Position 55 (Tyr-55) interacts with Mg(2+). The active-site Proton acceptor is the Asp-57. Residue Glu-63 participates in Mg(2+) binding. ATP contacts are provided by Thr-66 and Trp-420.

The protein belongs to the Pup ligase/Pup deamidase family. Pup-conjugating enzyme subfamily.

The catalysed reaction is ATP + [prokaryotic ubiquitin-like protein]-L-glutamate + [protein]-L-lysine = ADP + phosphate + N(6)-([prokaryotic ubiquitin-like protein]-gamma-L-glutamyl)-[protein]-L-lysine.. Its pathway is protein degradation; proteasomal Pup-dependent pathway. It participates in protein modification; protein pupylation. In terms of biological role, catalyzes the covalent attachment of the prokaryotic ubiquitin-like protein modifier Pup to the proteasomal substrate proteins, thereby targeting them for proteasomal degradation. This tagging system is termed pupylation. The ligation reaction involves the side-chain carboxylate of the C-terminal glutamate of Pup and the side-chain amino group of a substrate lysine. The protein is Pup--protein ligase of Streptomyces scabiei (strain 87.22).